The following is a 194-amino-acid chain: Imidazoleglycerol-phosphate dehydratase (194 aa).

Belongs to the imidazoleglycerol-phosphate dehydratase family.

The protein localises to the cytoplasm. It catalyses the reaction D-erythro-1-(imidazol-4-yl)glycerol 3-phosphate = 3-(imidazol-4-yl)-2-oxopropyl phosphate + H2O. The protein operates within amino-acid biosynthesis; L-histidine biosynthesis; L-histidine from 5-phospho-alpha-D-ribose 1-diphosphate: step 6/9. The polypeptide is Imidazoleglycerol-phosphate dehydratase (Bacillus subtilis (strain 168)).